Reading from the N-terminus, the 101-residue chain is Apolipoprotein C-II (101 aa).

The N-terminal stretch at 1–22 is a signal peptide; sequence MGTRFLLALFLVLLVLGFEVQG. Residues 66-74 are lipid binding; that stretch reads TVDEKLRDM. Positions 78–101 are lipoprotein lipase cofactor; that stretch reads STAAMSTYAGILTDQVLSMLKGEE.

Belongs to the apolipoprotein C2 family. In terms of processing, proapolipoprotein C-II is synthesized as a sialic acid containing glycoprotein which is subsequently desialylated prior to its proteolytic processing. Proapolipoprotein C-II, the major form found in plasma undergoes proteolytic cleavage of its N-terminal hexapeptide to generate apolipoprotein C-II, which occurs as the minor form in plasma.

It localises to the secreted. Functionally, component of chylomicrons, very low-density lipoproteins (VLDL), low-density lipoproteins (LDL), and high-density lipoproteins (HDL) in plasma. Plays an important role in lipoprotein metabolism as an activator of lipoprotein lipase. Both proapolipoprotein C-II and apolipoprotein C-II can activate lipoprotein lipase. The sequence is that of Apolipoprotein C-II (APOC2) from Aotus nancymaae (Ma's night monkey).